A 131-amino-acid chain; its full sequence is Interleukin-13 (131 aa).

The N-terminal stretch at 1–18 is a signal peptide; the sequence is MALWVTAVLALACLGGLA. Asn-42, Asn-53, Asn-76, and Asn-121 each carry an N-linked (GlcNAc...) asparagine glycan. Intrachain disulfides connect Cys-52–Cys-80 and Cys-68–Cys-94.

The protein belongs to the IL-4/IL-13 family. As to quaternary structure, interacts with IL13RA2.

The protein localises to the secreted. Its function is as follows. Cytokine that plays important roles in allergic inflammation and immune response to parasite infection. Synergizes with IL2 in regulating interferon-gamma synthesis. Stimulates B-cell proliferation, and activation of eosinophils, basophils, and mast cells. Plays an important role in controlling IL33 activity by modulating the production of transmembrane and soluble forms of interleukin-1 receptor-like 1/IL1RL1. Displays the capacity to antagonize Th1-driven proinflammatory immune response and downregulates synthesis of many proinflammatory cytokines including IL1, IL6, IL10, IL12 and TNF-alpha through a mechanism that partially involves suppression of NF-kappa-B. Also functions on nonhematopoietic cells, including endothelial cells where it induces vascular cell adhesion protein 1/VCAM1, which is important in the recruitment of eosinophils. Exerts its biological effects through its receptors which comprises the IL4R chain and the IL13RA1 chain, to activate JAK1 and TYK2, leading to the activation of STAT6. Aside from IL13RA1, another receptor IL13RA2 acts as a high affinity decoy for IL13 and mediates internalization and depletion of extracellular IL13. In Rattus norvegicus (Rat), this protein is Interleukin-13 (Il13).